Consider the following 157-residue polypeptide: UPF0225 protein PMI1492 (157 aa).

It belongs to the UPF0225 family.

This is UPF0225 protein PMI1492 from Proteus mirabilis (strain HI4320).